Reading from the N-terminus, the 95-residue chain is MSNVYWPLYEVFVRGKQGLSHRHVGSLHAADERMALENARDAYTRRSEGCSIWVVKASEIVASQPEERGEFFDPAESKVYRHPTFYTIPDGIEHM.

In terms of assembly, homotrimer. Forms a stable heterodimer with PaaC. Probably forms an oligomer with PaaAC.

Its pathway is aromatic compound metabolism; phenylacetate degradation. In terms of biological role, component of 1,2-phenylacetyl-CoA epoxidase multicomponent enzyme system which catalyzes the reduction of phenylacetyl-CoA (PA-CoA) to form 1,2-epoxyphenylacetyl-CoA. The subunit B may play a regulatory role or be directly involved in electron transport. The protein is 1,2-phenylacetyl-CoA epoxidase, subunit B (paaB) of Escherichia coli (strain K12).